The chain runs to 142 residues: Organic hydroperoxide resistance protein-like 2 (142 aa).

The protein belongs to the OsmC/Ohr family.

In Staphylococcus epidermidis (strain ATCC 12228 / FDA PCI 1200), this protein is Organic hydroperoxide resistance protein-like 2.